We begin with the raw amino-acid sequence, 288 residues long: ATP synthase gamma chain (288 aa).

The protein belongs to the ATPase gamma chain family. In terms of assembly, F-type ATPases have 2 components, CF(1) - the catalytic core - and CF(0) - the membrane proton channel. CF(1) has five subunits: alpha(3), beta(3), gamma(1), delta(1), epsilon(1). CF(0) has three main subunits: a, b and c.

It localises to the cell inner membrane. In terms of biological role, produces ATP from ADP in the presence of a proton gradient across the membrane. The gamma chain is believed to be important in regulating ATPase activity and the flow of protons through the CF(0) complex. The sequence is that of ATP synthase gamma chain from Chromobacterium violaceum (strain ATCC 12472 / DSM 30191 / JCM 1249 / CCUG 213 / NBRC 12614 / NCIMB 9131 / NCTC 9757 / MK).